The sequence spans 192 residues: Transmembrane protein 11, mitochondrial (192 aa).

The segment at Met1–Glu20 is disordered. Transmembrane regions (helical) follow at residues Thr84–Pro100 and Ile107–Ile124.

It belongs to the TMEM11 family. Associates with the mitochondrial contact site and cristae organizing system (MICOS) complex, composed of at least MICOS10/MIC10, CHCHD3/MIC19, CHCHD6/MIC25, APOOL/MIC27, IMMT/MIC60, APOO/MIC23/MIC26 and QIL1/MIC13. This complex was also known under the names MINOS or MitOS complex. The MICOS complex associates with mitochondrial outer membrane proteins SAMM50, MTX1, MTX2 and DNAJC11, mitochondrial inner membrane protein TMEM11 and with HSPA9. Interacts with IMMT/MIC60.

The protein localises to the mitochondrion inner membrane. In terms of biological role, plays a role in mitochondrial morphogenesis. In Bos taurus (Bovine), this protein is Transmembrane protein 11, mitochondrial (TMEM11).